The chain runs to 324 residues: Aquaporin-4 (324 aa).

At 1–36 the chain is on the cytoplasmic side; the sequence is MSDRPAARPWGKCGSLCRREEIMVAFKGVWTQAFWK. 2 S-palmitoyl cysteine lipidation sites follow: cysteine 13 and cysteine 17. A helical membrane pass occupies residues 37 to 57; it reads AVTAEFLAMLIFVLLSLGSTI. Residues 58–69 lie on the Extracellular side of the membrane; sequence NWGGKENPLPVD. A helical membrane pass occupies residues 70 to 89; the sequence is MVLISLCFGLSIATMVQCFG. Over 90–93 the chain is Cytoplasmic; it reads HISG. An intramembrane region (discontinuously helical) is located at residues 94–101; it reads GHINPAVT. Residues 97-99 carry the NPA 1 motif; sequence NPA. The Cytoplasmic portion of the chain corresponds to 102–115; that stretch reads VAMVCTRKISIAKS. The residue at position 111 (serine 111) is a Phosphoserine; by PKG. A helical membrane pass occupies residues 116 to 136; the sequence is VFYIAAQCLGAIIGAGILYLV. The Extracellular segment spans residues 137-155; it reads TPPSVVGGLGVTTVHGNLT. A glycan (N-linked (GlcNAc...) asparagine) is linked at asparagine 153. The chain crosses the membrane as a helical span at residues 156-176; sequence AGHGLLVELIITFQLVFTIFA. Over 177–184 the chain is Cytoplasmic; that stretch reads SCDSKRTD. A Phosphoserine; by PKC modification is found at serine 180. A helical transmembrane segment spans residues 185 to 205; sequence VTGSIALAIGFSVAIGHLFAI. Asparagine 206 is a glycosylation site (N-linked (GlcNAc...) asparagine). Residues 206–208 are Extracellular-facing; that stretch reads NYT. The segment at residues 209-222 is an intramembrane region (discontinuously helical); it reads GASMNPARSFGPAV. The short motif at 213–215 is the NPA 2 element; it reads NPA. Over 223-231 the chain is Extracellular; it reads IMGNWENHW. A helical transmembrane segment spans residues 232–252; the sequence is IYWVGPIIGAVLAGGLYEYVF. The Cytoplasmic portion of the chain corresponds to 253 to 324; sequence CPDVELKRRF…PSGEIAQTQH (72 aa). Phosphoserine is present on residues serine 276 and serine 285. Threonine 289 is modified (phosphothreonine). Over residues 305 to 316 the composition is skewed to basic and acidic residues; the sequence is DRGDEKKGKDPS. The tract at residues 305–324 is disordered; the sequence is DRGDEKKGKDPSGEIAQTQH.

It belongs to the MIP/aquaporin (TC 1.A.8) family. Homotetramer. The tetramers can form oligomeric arrays in membranes. The size of the oligomers differs between tissues and is smaller in skeletal muscle than in brain. Interaction between AQP4 oligomeric arrays in close-by cells can contribute to cell-cell adhesion. Part of a complex containing MLC1, TRPV4, HEPACAM and ATP1B1. Post-translationally, phosphorylation by PKC at Ser-180 reduces conductance by 50%. Phosphorylation by PKG at Ser-111 in response to glutamate increases conductance by 40%. Isoform 2: Palmitoylated on its N-terminal region. Isoform 1: Not palmitoylated. Not expressed in kidney, Detectable in gastric parietal and brain astroglial cells. The absence of AQP4 in kidney may be critical for the extreme urinary concentration that occurs in this species (up to 5,000 mosmol/kg H(2)O).

The protein resides in the cell membrane. It is found in the basolateral cell membrane. The protein localises to the endosome membrane. Its subcellular location is the sarcolemma. It localises to the cell projection. The catalysed reaction is H2O(in) = H2O(out). Forms a water-specific channel. Plays an important role in brain water homeostasis and in glymphatic solute transport. Required for a normal rate of water exchange across the blood brain interface. Required for normal levels of cerebrospinal fluid influx into the brain cortex and parenchyma along paravascular spaces that surround penetrating arteries, and for normal drainage of interstitial fluid along paravenous drainage pathways. Thereby, it is required for normal clearance of solutes from the brain interstitial fluid, including soluble beta-amyloid peptides derived from APP. Plays a redundant role in urinary water homeostasis and urinary concentrating ability. The protein is Aquaporin-4 (AQP4) of Dipodomys merriami (Merriam's kangaroo rat).